The chain runs to 75 residues: Small ribosomal subunit protein bS18 (75 aa).

It belongs to the bacterial ribosomal protein bS18 family. Part of the 30S ribosomal subunit. Forms a tight heterodimer with protein bS6.

Functionally, binds as a heterodimer with protein bS6 to the central domain of the 16S rRNA, where it helps stabilize the platform of the 30S subunit. The protein is Small ribosomal subunit protein bS18 of Pseudoalteromonas atlantica (strain T6c / ATCC BAA-1087).